Here is a 553-residue protein sequence, read N- to C-terminus: MKNINPINTNAWNSLQQHFNNIKEVKIRDLFLLDSQRFDNFSAIFDNQILLDYSKNRITTETLYLLFALAKECDLPNAIAAMFSGQKINRTEDRAVLHIALRNRSNKIIAIDSQDIMPEVNAVLSKMRQFCNQIISGQWKGYTGKPITNIVNIGIGGSDLGPYMVTEALRPYKNHLNMHFVSNVDGTHITEKFKYLDPETTLFLIASKTFTTQETMTNAHSARNWFLKTAVNEQYIAQHFVAISTNANDVVKFGININNMFQFWDWVGGRYSLWSAIGLSIALSLGFENFELLLEGAHAMDCHFTETQLEHNLPVILALINIWYNNFFGFETEAIIPYDQYMHRFAAYLQQCHMESNGKSIDRNGNIINYQTGSIIWGEPGTNSQHSFYQLLHQGTKIVPCDFIVPAISHNPLGDHHLKLLANCFAQTEALAFGKSCQFIEEKFIMGTTSEQKLSIIPFKVCGGNRPTNSILVKQITPYNLGALISLYEHKIFTQSVILNIYAFDQWGVELGKTQANSVLSELATDNIVTCHNSSTNGLINYYKSWRYKTDDK.

The active-site Proton donor is the glutamate 355. Residues histidine 386 and lysine 513 contribute to the active site.

Belongs to the GPI family.

The protein localises to the cytoplasm. It carries out the reaction alpha-D-glucose 6-phosphate = beta-D-fructose 6-phosphate. It participates in carbohydrate biosynthesis; gluconeogenesis. Its pathway is carbohydrate degradation; glycolysis; D-glyceraldehyde 3-phosphate and glycerone phosphate from D-glucose: step 2/4. Catalyzes the reversible isomerization of glucose-6-phosphate to fructose-6-phosphate. This is Glucose-6-phosphate isomerase from Baumannia cicadellinicola subsp. Homalodisca coagulata.